The sequence spans 178 residues: Cytochrome b6-f complex iron-sulfur subunit (178 aa).

Residues 20–42 (LLTFGSVTGVALGALYPVVNYFI) form a helical membrane-spanning segment. The 91-residue stretch at 71–161 (THPAGDRSLV…VSVENDNVFV (91 aa)) folds into the Rieske domain. [2Fe-2S] cluster contacts are provided by cysteine 107, histidine 109, cysteine 125, and histidine 128. Residues cysteine 112 and cysteine 127 are joined by a disulfide bond.

Belongs to the Rieske iron-sulfur protein family. The 4 large subunits of the cytochrome b6-f complex are cytochrome b6, subunit IV (17 kDa polypeptide, PetD), cytochrome f and the Rieske protein, while the 4 small subunits are PetG, PetL, PetM and PetN. The complex functions as a dimer. It depends on [2Fe-2S] cluster as a cofactor.

It is found in the cellular thylakoid membrane. It catalyses the reaction 2 oxidized [plastocyanin] + a plastoquinol + 2 H(+)(in) = 2 reduced [plastocyanin] + a plastoquinone + 4 H(+)(out). Its function is as follows. Component of the cytochrome b6-f complex, which mediates electron transfer between photosystem II (PSII) and photosystem I (PSI), cyclic electron flow around PSI, and state transitions. This chain is Cytochrome b6-f complex iron-sulfur subunit, found in Synechococcus sp. (strain WH7803).